The primary structure comprises 318 residues: DNA-directed RNA polymerase subunit alpha 2 (318 aa).

Positions 1 to 227 are alpha N-terminal domain (alpha-NTD); that stretch reads MALENLLHPT…NQLRNIVDIE (227 aa). An alpha C-terminal domain (alpha-CTD) region spans residues 242 to 318; that stretch reads INPILLKHVE…TLIENWPQDL (77 aa).

The protein belongs to the RNA polymerase alpha chain family. As to quaternary structure, homodimer. The RNAP catalytic core consists of 2 alpha, 1 beta, 1 beta' and 1 omega subunit. When a sigma factor is associated with the core the holoenzyme is formed, which can initiate transcription.

It catalyses the reaction RNA(n) + a ribonucleoside 5'-triphosphate = RNA(n+1) + diphosphate. In terms of biological role, DNA-dependent RNA polymerase catalyzes the transcription of DNA into RNA using the four ribonucleoside triphosphates as substrates. The protein is DNA-directed RNA polymerase subunit alpha 2 of Francisella tularensis subsp. novicida (strain U112).